We begin with the raw amino-acid sequence, 1073 residues long: Transmembrane protein 132E (1073 aa).

An N-terminal signal peptide occupies residues 1–33; it reads MGHFVVQGDLPWILCSLRLVIMIIAGKVSPTSS. The Extracellular portion of the chain corresponds to 34–899; the sequence is DALFSVPVPS…MTDLEIGMYA (866 aa). Asn-102 is a glycosylation site (N-linked (GlcNAc...) asparagine). The segment at 246 to 270 is disordered; sequence DPDSNDECGESYPRRGGPSRGESLS. Asn-324, Asn-396, and Asn-746 each carry an N-linked (GlcNAc...) asparagine glycan. A helical transmembrane segment spans residues 900-920; the sequence is LLGVFCLAILVFLINCIVFVL. Topologically, residues 921–1073 are cytoplasmic; that stretch reads KYRHKRIPPE…DYMRRIKEIA (153 aa). A compositionally biased stretch (polar residues) spans 952–970; sequence TQSDLSPQTVESPSNTLEG. A disordered region spans residues 952-1024; sequence TQSDLSPQTV…PTSKRKRVKF (73 aa). Over residues 982-994 the composition is skewed to low complexity; it reads SGSSQTSVQSQVH.

This sequence belongs to the TMEM132 family.

The protein localises to the membrane. Functionally, required for normal inner ear hair cell function and hearing. The polypeptide is Transmembrane protein 132E (tmem132e) (Danio rerio (Zebrafish)).